The primary structure comprises 697 residues: Phosphoribosylformylglycinamidine synthase subunit PurL (697 aa).

Residue His-34 is part of the active site. The ATP site is built by Tyr-37 and Lys-76. Glu-78 contributes to the Mg(2+) binding site. Residues 79 to 82 and Arg-101 each bind substrate; that span reads SHNH. His-80 serves as the catalytic Proton acceptor. Asp-102 contacts Mg(2+). Position 224 (Gln-224) interacts with substrate. Residue Asp-250 participates in Mg(2+) binding. A substrate-binding site is contributed by 294 to 296; it reads ETQ. 2 residues coordinate ATP: Asp-472 and Gly-509. Ser-512 provides a ligand contact to substrate.

The protein belongs to the FGAMS family. As to quaternary structure, monomer. Part of the FGAM synthase complex composed of 1 PurL, 1 PurQ and 2 PurS subunits.

It is found in the cytoplasm. The enzyme catalyses N(2)-formyl-N(1)-(5-phospho-beta-D-ribosyl)glycinamide + L-glutamine + ATP + H2O = 2-formamido-N(1)-(5-O-phospho-beta-D-ribosyl)acetamidine + L-glutamate + ADP + phosphate + H(+). It participates in purine metabolism; IMP biosynthesis via de novo pathway; 5-amino-1-(5-phospho-D-ribosyl)imidazole from N(2)-formyl-N(1)-(5-phospho-D-ribosyl)glycinamide: step 1/2. Functionally, part of the phosphoribosylformylglycinamidine synthase complex involved in the purines biosynthetic pathway. Catalyzes the ATP-dependent conversion of formylglycinamide ribonucleotide (FGAR) and glutamine to yield formylglycinamidine ribonucleotide (FGAM) and glutamate. The FGAM synthase complex is composed of three subunits. PurQ produces an ammonia molecule by converting glutamine to glutamate. PurL transfers the ammonia molecule to FGAR to form FGAM in an ATP-dependent manner. PurS interacts with PurQ and PurL and is thought to assist in the transfer of the ammonia molecule from PurQ to PurL. The polypeptide is Phosphoribosylformylglycinamidine synthase subunit PurL (Pyrobaculum aerophilum (strain ATCC 51768 / DSM 7523 / JCM 9630 / CIP 104966 / NBRC 100827 / IM2)).